The chain runs to 489 residues: Cysteine--tRNA ligase (489 aa).

A Zn(2+)-binding site is contributed by Cys27. The short motif at 29 to 39 (VTVYDLCHLGH) is the 'HIGH' region element. The Zn(2+) site is built by Cys211, His236, and Glu240. The short motif at 268-272 (KMSKS) is the 'KMSKS' region element. An ATP-binding site is contributed by Lys271.

The protein belongs to the class-I aminoacyl-tRNA synthetase family. As to quaternary structure, monomer. Zn(2+) is required as a cofactor.

The protein localises to the cytoplasm. The catalysed reaction is tRNA(Cys) + L-cysteine + ATP = L-cysteinyl-tRNA(Cys) + AMP + diphosphate. This chain is Cysteine--tRNA ligase, found in Prochlorococcus marinus (strain MIT 9312).